A 236-amino-acid polypeptide reads, in one-letter code: UPF0257 lipoprotein YnfC (236 aa).

A signal peptide spans 1–16 (MKKPLLLTLLCMILAG). C17 carries the N-palmitoyl cysteine lipid modification. The S-diacylglycerol cysteine moiety is linked to residue C17.

This sequence belongs to the UPF0257 family.

It is found in the cell membrane. The chain is UPF0257 lipoprotein YnfC from Salmonella schwarzengrund (strain CVM19633).